Reading from the N-terminus, the 126-residue chain is Cell cycle protein GpsB (126 aa).

Residues 35-72 are a coiled coil; that stretch reads LDLVIKDYQTYQENIDRLTADNTRLFNKVEELNRQLSA.

It belongs to the GpsB family. Forms polymers through the coiled coil domains. Interacts with PBP1, MreC and EzrA.

Its subcellular location is the cytoplasm. Divisome component that associates with the complex late in its assembly, after the Z-ring is formed, and is dependent on DivIC and PBP2B for its recruitment to the divisome. Together with EzrA, is a key component of the system that regulates PBP1 localization during cell cycle progression. Its main role could be the removal of PBP1 from the cell pole after pole maturation is completed. Also contributes to the recruitment of PBP1 to the division complex. Not essential for septum formation. The sequence is that of Cell cycle protein GpsB from Latilactobacillus sakei subsp. sakei (strain 23K) (Lactobacillus sakei subsp. sakei).